Consider the following 337-residue polypeptide: Glycerol-3-phosphate dehydrogenase [NAD(P)+] (337 aa).

S17, Y18, H38, and K112 together coordinate NADPH. The sn-glycerol 3-phosphate site is built by K112, G141, and T143. A145 is an NADPH binding site. 5 residues coordinate sn-glycerol 3-phosphate: K197, D250, S260, R261, and N262. The Proton acceptor role is filled by K197. R261 contacts NADPH. 2 residues coordinate NADPH: V285 and E287.

The protein belongs to the NAD-dependent glycerol-3-phosphate dehydrogenase family.

It is found in the cytoplasm. It carries out the reaction sn-glycerol 3-phosphate + NAD(+) = dihydroxyacetone phosphate + NADH + H(+). The enzyme catalyses sn-glycerol 3-phosphate + NADP(+) = dihydroxyacetone phosphate + NADPH + H(+). The protein operates within membrane lipid metabolism; glycerophospholipid metabolism. Its function is as follows. Catalyzes the reduction of the glycolytic intermediate dihydroxyacetone phosphate (DHAP) to sn-glycerol 3-phosphate (G3P), the key precursor for phospholipid synthesis. In Pasteurella multocida (strain Pm70), this protein is Glycerol-3-phosphate dehydrogenase [NAD(P)+].